The sequence spans 145 residues: Basic phospholipase A2 KPA2 (145 aa).

The N-terminal stretch at methionine 1–alanine 19 is a signal peptide. A propeptide spanning residues alanine 20–leucine 27 is cleaved from the precursor. 7 disulfides stabilise this stretch: cysteine 38-cysteine 97, cysteine 52-cysteine 144, cysteine 54-cysteine 70, cysteine 69-cysteine 125, cysteine 76-cysteine 118, cysteine 86-cysteine 111, and cysteine 104-cysteine 116. Ca(2+)-binding residues include tyrosine 53, glycine 55, and glycine 57. Histidine 73 is an active-site residue. A Ca(2+)-binding site is contributed by aspartate 74. Aspartate 119 is an active-site residue.

It belongs to the phospholipase A2 family. Group I subfamily. D49 sub-subfamily. As to quaternary structure, monomer. Requires Ca(2+) as cofactor. Expressed by the venom gland.

Its subcellular location is the secreted. The catalysed reaction is a 1,2-diacyl-sn-glycero-3-phosphocholine + H2O = a 1-acyl-sn-glycero-3-phosphocholine + a fatty acid + H(+). Snake venom phospholipase A2 (PLA2) that shows anticoagulant and neurotoxic activities. PLA2 catalyzes the calcium-dependent hydrolysis of the 2-acyl groups in 3-sn-phosphoglycerides. This is Basic phospholipase A2 KPA2 from Bungarus caeruleus (Indian krait).